The following is a 542-amino-acid chain: MDEYLENTNLEELEQECFMEDYQHEDVVEQENHQVDANDIYENQQMNDESQLNQDVKISQQKEQAVEMIEEQQQNNQDKFKQFQDCMAHITELNFKRNYQNLTEQSSSNNVVAEELDIKESLKLQMEYYFCDTNLTHDSYLRGIISKSPKNCVDIKVFLKFNKIQQILKQIQDKQIVSTYGIENQSQKKNHKNYKNQNATFSKKDLIHLIRDSLKESKILKVKMDSLKVKRRFPFNLEQALKNSKQRTLYIDFLPPKCSKQTLVSIFGNFRIININLPLQKNSQLCQGFAFIEFFSEEEANQALITKNSSIPKELILLTEKKIGQGSIRIITYKKWQEEKQSFKELSKNQNEQKNKNMNQSRKASDEFVSIDVEIKQNCLIKIINIPQGTLKAEVVLAVRHLGYEFYCDYIDENSNQINSNKISLSTQQQNTAQCSNIQIENNLIQQDQHPQLNDLLKEGQAMIRFQNSDEQRLAIQKLLNHNNNKLQIEIRGQICDVISTIPEDEEKNYWNYIKFKKNEFRKFFFMKKQQKKQNITQNYNK.

In terms of domain architecture, HTH La-type RNA-binding spans 112-239 (VAEELDIKES…KRRFPFNLEQ (128 aa)). One can recognise an RRM domain in the interval 247–335 (RTLYIDFLPP…GSIRIITYKK (89 aa)). A xRRM domain is found at 374-542 (EIKQNCLIKI…KQNITQNYNK (169 aa)).

This sequence belongs to the LARP7 family. In terms of assembly, component of the telomerase holoenzyme complex, composed of the catalytic core (the catalytic subunit TERT, the telomerase RNA template component TER and TAP65/p65), which is associated with two heterotrimeric subcomplexes: (i) the replication protein A (RPA)-related subcomplex, composed of TEB1, RPA2/TEB2 and RPA3/TEB3 and (ii) the CST-like subcomplex, composed of TAP75/p75, TAP45/p45 and TAP19/p19. TEB1 and the CST-like subcomplex are tethered to the catalytic core by TAP50/p50.

It localises to the chromosome. The protein resides in the telomere. RNA-binding protein required for assembly of the holoenzyme telomerase ribonucleoprotein (RNP) complex. Telomerase is an essential ribonucleoprotein enzyme that copies new telomeric repeats onto chromosome ends by repetitively synthesizing the short telomere-repeat sequence 5'-TTGGGG-3' using an RNA template component TER. TAP65/p65 specifically binds telomerase RNA template TER and is required for biogenesis and placement of the TER stem-terminus element: TAP65/p65 first protects the 3'-end of TER from degradation and acts as a chaperone to correctly fold TER for protein binding; it then bends TER stem-loop IV to position it for interaction of stem-loop IV with catalytic TERT RNA-binding domain. The chain is La-related protein 7 homolog from Tetrahymena thermophila (strain SB210).